We begin with the raw amino-acid sequence, 84 residues long: Large ribosomal subunit protein bL27 (84 aa).

Residues 1 to 22 are disordered; it reads MAHKKAGGSTRNGRDSESKRLG.

This sequence belongs to the bacterial ribosomal protein bL27 family.

The sequence is that of Large ribosomal subunit protein bL27 from Shewanella baltica (strain OS223).